A 257-amino-acid polypeptide reads, in one-letter code: tRNA pseudouridine synthase A (257 aa).

Asp-53 acts as the Nucleophile in catalysis. Tyr-111 is a substrate binding site.

Belongs to the tRNA pseudouridine synthase TruA family. In terms of assembly, homodimer.

It catalyses the reaction uridine(38/39/40) in tRNA = pseudouridine(38/39/40) in tRNA. In terms of biological role, formation of pseudouridine at positions 38, 39 and 40 in the anticodon stem and loop of transfer RNAs. In Xanthomonas euvesicatoria pv. vesicatoria (strain 85-10) (Xanthomonas campestris pv. vesicatoria), this protein is tRNA pseudouridine synthase A.